A 426-amino-acid polypeptide reads, in one-letter code: 3-phosphoshikimate 1-carboxyvinyltransferase (426 aa).

3 residues coordinate 3-phosphoshikimate: Lys22, Ser23, and Arg27. Lys22 is a phosphoenolpyruvate binding site. The phosphoenolpyruvate site is built by Gly96 and Arg124. Residues Ser170, Ser171, Gln172, Ser198, Asp314, Asn337, and Lys341 each coordinate 3-phosphoshikimate. Gln172 is a binding site for phosphoenolpyruvate. The active-site Proton acceptor is Asp314. Arg345, Arg387, and Lys412 together coordinate phosphoenolpyruvate.

Belongs to the EPSP synthase family. As to quaternary structure, monomer.

It is found in the cytoplasm. It catalyses the reaction 3-phosphoshikimate + phosphoenolpyruvate = 5-O-(1-carboxyvinyl)-3-phosphoshikimate + phosphate. The protein operates within metabolic intermediate biosynthesis; chorismate biosynthesis; chorismate from D-erythrose 4-phosphate and phosphoenolpyruvate: step 6/7. Functionally, catalyzes the transfer of the enolpyruvyl moiety of phosphoenolpyruvate (PEP) to the 5-hydroxyl of shikimate-3-phosphate (S3P) to produce enolpyruvyl shikimate-3-phosphate and inorganic phosphate. The sequence is that of 3-phosphoshikimate 1-carboxyvinyltransferase from Shewanella pealeana (strain ATCC 700345 / ANG-SQ1).